Consider the following 124-residue polypeptide: MFAVIKTGGRQYRVVPDDVLEIGKIAGDVGTIVQLGEVLVLGADTPVLGVPTVAGASVAAEVLDHKRGPKVISFKKRRRKNSKRKRGYRDEITVLRITEILADGNAPSIGPRVRKAKPAAEAAE.

The segment at 105-124 (NAPSIGPRVRKAKPAAEAAE) is disordered.

The protein belongs to the bacterial ribosomal protein bL21 family. Part of the 50S ribosomal subunit. Contacts protein L20.

Functionally, this protein binds to 23S rRNA in the presence of protein L20. The sequence is that of Large ribosomal subunit protein bL21 from Rhodopseudomonas palustris (strain BisA53).